The primary structure comprises 130 residues: MVWMRSAIVAVALGVTVAAVAAACWLPQLHRHVAHPNHPLTTSVGSEFVINTDHGHLVDNSMPPCPERLATAVLPRSATPVLLPDVVAAAPGMTAALTDPVAPAARGPPAAQGSVRTGQDLLTRFCLARR.

The signal sequence occupies residues 1 to 23 (MVWMRSAIVAVALGVTVAAVAAA). Residue Cys24 is the site of N-palmitoyl cysteine attachment. Cys24 carries the S-diacylglycerol cysteine lipid modification.

Its subcellular location is the cell membrane. Its function is as follows. May play an essential role in M.tuberculosis replication and survival inside the host cell. This chain is Lipoprotein LpqS, found in Mycobacterium tuberculosis (strain ATCC 25618 / H37Rv).